The following is a 246-amino-acid chain: Protein PHLOEM PROTEIN 2-LIKE A1 (246 aa).

In terms of tissue distribution, vascular tissues, specifically in phloem companion cell-sieve element complexes.

This is Protein PHLOEM PROTEIN 2-LIKE A1 (PP2A1) from Arabidopsis thaliana (Mouse-ear cress).